A 180-amino-acid chain; its full sequence is 2-oxoglutarate dehydrogenase, mitochondrial (180 aa).

Lysine 14 is modified (N6-succinyllysine). The residue at position 40 (serine 40) is a Phosphoserine. A thiamine diphosphate-binding site is contributed by arginine 64.

The protein belongs to the alpha-ketoglutarate dehydrogenase family. Homodimer. The 2-oxoglutarate dehydrogenase complex is composed of OGDH (2-oxoglutarate dehydrogenase; E1), DLST (dihydrolipoamide succinyltransferase; E2) and DLD (dihydrolipoamide dehydrogenase; E3). It contains multiple copies of the three enzymatic components (E1, E2 and E3). In the nucleus, the 2-oxoglutarate dehydrogenase complex associates with KAT2A. Interacts with ABHD11; this interaction maintains the functional lipoylation of the 2-oxoglutarate dehydrogenase complex. Thiamine diphosphate is required as a cofactor. Requires Mg(2+) as cofactor.

It localises to the mitochondrion matrix. It is found in the nucleus. The catalysed reaction is N(6)-[(R)-lipoyl]-L-lysyl-[protein] + 2-oxoglutarate + H(+) = N(6)-[(R)-S(8)-succinyldihydrolipoyl]-L-lysyl-[protein] + CO2. Its activity is regulated as follows. Calcium ions and ADP stimulate, whereas ATP and NADH reduce catalytic activity. In terms of biological role, 2-oxoglutarate dehydrogenase (E1) component of the 2-oxoglutarate dehydrogenase complex (OGDHC), which mediates the decarboxylation of alpha-ketoglutarate. The 2-oxoglutarate dehydrogenase complex catalyzes the overall conversion of 2-oxoglutarate to succinyl-CoA and CO(2). The 2-oxoglutarate dehydrogenase complex is mainly active in the mitochondrion. A fraction of the 2-oxoglutarate dehydrogenase complex also localizes in the nucleus and is required for lysine succinylation of histones: associates with KAT2A on chromatin and provides succinyl-CoA to histone succinyltransferase KAT2A. The polypeptide is 2-oxoglutarate dehydrogenase, mitochondrial (Mesocricetus auratus (Golden hamster)).